The chain runs to 305 residues: Putative ankyrin repeat protein RF_0580 (305 aa).

ANK repeat units lie at residues 5-34, 39-68, 72-101, 107-136, 140-169, 173-202, and 206-235; these read YNKN…NIDE, RGET…SPNI, SGQT…NIDL, CGHS…DINS, FGAS…DVNA, YEDT…DVNI, and NNFT…TIKI.

This chain is Putative ankyrin repeat protein RF_0580, found in Rickettsia felis (strain ATCC VR-1525 / URRWXCal2) (Rickettsia azadi).